The sequence spans 570 residues: Formate--tetrahydrofolate ligase (570 aa).

Thr-65–Thr-72 provides a ligand contact to ATP.

Belongs to the formate--tetrahydrofolate ligase family.

It carries out the reaction (6S)-5,6,7,8-tetrahydrofolate + formate + ATP = (6R)-10-formyltetrahydrofolate + ADP + phosphate. It participates in one-carbon metabolism; tetrahydrofolate interconversion. The sequence is that of Formate--tetrahydrofolate ligase from Shewanella sp. (strain ANA-3).